The following is a 258-amino-acid chain: Phosphonates import ATP-binding protein PhnC 1 (258 aa).

The ABC transporter domain occupies 2-246 (IEFKDVGLVY…TFEEIYGRSI (245 aa)). ATP is bound at residue 35–42 (GLSGAGKS).

It belongs to the ABC transporter superfamily. Phosphonates importer (TC 3.A.1.9.1) family. The complex is composed of two ATP-binding proteins (PhnC), two transmembrane proteins (PhnE) and a solute-binding protein (PhnD).

Its subcellular location is the cell membrane. The catalysed reaction is phosphonate(out) + ATP + H2O = phosphonate(in) + ADP + phosphate + H(+). In terms of biological role, part of the ABC transporter complex PhnCDE involved in phosphonates import. Responsible for energy coupling to the transport system. This is Phosphonates import ATP-binding protein PhnC 1 from Oceanobacillus iheyensis (strain DSM 14371 / CIP 107618 / JCM 11309 / KCTC 3954 / HTE831).